Reading from the N-terminus, the 469-residue chain is UDP-N-acetylmuramate--L-alanine ligase (469 aa).

ATP is bound at residue 112–118; it reads GTHGKTT.

It belongs to the MurCDEF family.

The protein resides in the cytoplasm. The enzyme catalyses UDP-N-acetyl-alpha-D-muramate + L-alanine + ATP = UDP-N-acetyl-alpha-D-muramoyl-L-alanine + ADP + phosphate + H(+). The protein operates within cell wall biogenesis; peptidoglycan biosynthesis. Cell wall formation. This chain is UDP-N-acetylmuramate--L-alanine ligase, found in Herminiimonas arsenicoxydans.